Here is a 272-residue protein sequence, read N- to C-terminus: Shikimate dehydrogenase (NADP(+)) (272 aa).

Shikimate contacts are provided by residues 14-16 (SKS) and T61. The active-site Proton acceptor is the K65. Residue E77 coordinates NADP(+). N86 and D102 together coordinate shikimate. Residues 126-130 (GAGGA), 149-154 (NRTASR), and M213 each bind NADP(+). Y215 serves as a coordination point for shikimate. G237 is a binding site for NADP(+).

This sequence belongs to the shikimate dehydrogenase family. As to quaternary structure, homodimer.

It carries out the reaction shikimate + NADP(+) = 3-dehydroshikimate + NADPH + H(+). The protein operates within metabolic intermediate biosynthesis; chorismate biosynthesis; chorismate from D-erythrose 4-phosphate and phosphoenolpyruvate: step 4/7. Its function is as follows. Involved in the biosynthesis of the chorismate, which leads to the biosynthesis of aromatic amino acids. Catalyzes the reversible NADPH linked reduction of 3-dehydroshikimate (DHSA) to yield shikimate (SA). This is Shikimate dehydrogenase (NADP(+)) from Salmonella heidelberg (strain SL476).